The following is a 249-amino-acid chain: 5'-nucleotidase SurE (249 aa).

A divalent metal cation-binding residues include D8, D9, S39, and N91.

This sequence belongs to the SurE nucleotidase family. Requires a divalent metal cation as cofactor.

The protein localises to the cytoplasm. The catalysed reaction is a ribonucleoside 5'-phosphate + H2O = a ribonucleoside + phosphate. Its function is as follows. Nucleotidase that shows phosphatase activity on nucleoside 5'-monophosphates. The polypeptide is 5'-nucleotidase SurE (Pseudomonas putida (strain ATCC 47054 / DSM 6125 / CFBP 8728 / NCIMB 11950 / KT2440)).